A 511-amino-acid chain; its full sequence is NAD(P)H-quinone oxidoreductase subunit 2 B, chloroplastic (511 aa).

13 helical membrane passes run 24 to 44 (LLLF…GLIL), 57 to 77 (IPWL…ALLF), 99 to 119 (IFQF…VEYI), 124 to 144 (MAIT…MFLC), 149 to 169 (LITI…LSGY), 183 to 203 (YLLM…WLYG), 227 to 247 (PGIS…LSPA), 295 to 315 (WHLL…LIAI), 323 to 343 (MLAY…IVGD), 354 to 374 (YMLF…LFGL), 395 to 415 (ALSL…AGFF), 418 to 438 (LHLF…IGLL), and 484 to 504 (MIVC…IIAI).

Belongs to the complex I subunit 2 family. As to quaternary structure, NDH is composed of at least 16 different subunits, 5 of which are encoded in the nucleus.

Its subcellular location is the plastid. The protein localises to the chloroplast thylakoid membrane. The enzyme catalyses a plastoquinone + NADH + (n+1) H(+)(in) = a plastoquinol + NAD(+) + n H(+)(out). The catalysed reaction is a plastoquinone + NADPH + (n+1) H(+)(in) = a plastoquinol + NADP(+) + n H(+)(out). Its function is as follows. NDH shuttles electrons from NAD(P)H:plastoquinone, via FMN and iron-sulfur (Fe-S) centers, to quinones in the photosynthetic chain and possibly in a chloroplast respiratory chain. The immediate electron acceptor for the enzyme in this species is believed to be plastoquinone. Couples the redox reaction to proton translocation, and thus conserves the redox energy in a proton gradient. The polypeptide is NAD(P)H-quinone oxidoreductase subunit 2 B, chloroplastic (Nandina domestica (Heavenly bamboo)).